The sequence spans 226 residues: uncharacterized protein (226 aa).

A helical membrane pass occupies residues 203–225; it reads FGISDIYTSTLSFGLIISLFYLL.

The protein resides in the membrane. This is an uncharacterized protein from Acanthamoeba polyphaga (Amoeba).